Consider the following 187-residue polypeptide: Large ribosomal subunit protein bL17 (187 aa).

The tract at residues 122–187 is disordered; the sequence is PKVRSSRTST…EADAAEKSDK (66 aa). Positions 127 to 144 are enriched in low complexity; it reads SRTSTATAPVAAAPVAEA. Positions 145–157 are enriched in acidic residues; sequence PAEESDVPVEETD. Residues 167–176 show a composition bias toward low complexity; the sequence is AETTDAAAAE.

This sequence belongs to the bacterial ribosomal protein bL17 family. As to quaternary structure, part of the 50S ribosomal subunit. Contacts protein L32.

This Clavibacter sepedonicus (Clavibacter michiganensis subsp. sepedonicus) protein is Large ribosomal subunit protein bL17.